Consider the following 827-residue polypeptide: Leucine--tRNA ligase (827 aa).

A 'HIGH' region motif is present at residues proline 42 to histidine 52. The 'KMSKS' region motif lies at lysine 581 to serine 585. Lysine 584 contacts ATP.

It belongs to the class-I aminoacyl-tRNA synthetase family.

It localises to the cytoplasm. The enzyme catalyses tRNA(Leu) + L-leucine + ATP = L-leucyl-tRNA(Leu) + AMP + diphosphate. The polypeptide is Leucine--tRNA ligase (Desulforamulus reducens (strain ATCC BAA-1160 / DSM 100696 / MI-1) (Desulfotomaculum reducens)).